The chain runs to 240 residues: Uridylate kinase (240 aa).

13–16 (KASG) contacts ATP. The interval 21–26 (GSQGFG) is involved in allosteric activation by GTP. A UMP-binding site is contributed by glycine 55. Glycine 56 and arginine 60 together coordinate ATP. UMP is bound by residues aspartate 75 and 136–143 (TGNPFFTT). ATP contacts are provided by threonine 163, glutamine 164, tyrosine 169, and aspartate 172.

Belongs to the UMP kinase family. Homohexamer.

Its subcellular location is the cytoplasm. It carries out the reaction UMP + ATP = UDP + ADP. The protein operates within pyrimidine metabolism; CTP biosynthesis via de novo pathway; UDP from UMP (UMPK route): step 1/1. Its activity is regulated as follows. Allosterically activated by GTP. Inhibited by UTP. Catalyzes the reversible phosphorylation of UMP to UDP. This is Uridylate kinase from Brucella melitensis biotype 1 (strain ATCC 23456 / CCUG 17765 / NCTC 10094 / 16M).